A 307-amino-acid chain; its full sequence is Peroxisomal membrane protein PMP34 (307 aa).

Topologically, residues 1-9 are cytoplasmic; it reads MASVLSYES. A necessary for targeting to peroxisomes and interaction with PEX19 region spans residues 1–147; sequence MASVLSYESL…NEDIIPTNYK (147 aa). 3 Solcar repeats span residues 7 to 92, 99 to 192, and 200 to 294; these read YESL…LKAV, SSTG…LKRQ, and LSSL…LTAA. A helical transmembrane segment spans residues 10–30; it reads LVHAVAGAVGSVTAMTVFFPL. At 31–66 the chain is on the lumenal side; sequence DTARLRLQVDEKRKSKTTHAVLLEIIKEEGLLAPYR. The chain crosses the membrane as a helical span at residues 67 to 87; that stretch reads GWFPVISSLCCSNFVYFYTFN. The Cytoplasmic portion of the chain corresponds to 88–104; sequence SLKAVWVKGQRSSTGKD. Residues 105-125 traverse the membrane as a helical segment; sequence LVVGFVAGVVNVLLTTPLWVV. Topologically, residues 126–160 are lumenal; it reads NTRLKLQGAKFRNEDIIPTNYKGIIDAFHQIIRDE. The chain crosses the membrane as a helical span at residues 161–181; it reads GILALWNGTFPSLLLVFNPAI. Over 182-202 the chain is Cytoplasmic; sequence QFMFYEGLKRQLLKKRMKLSS. A Peroxisome localization signal motif is present at residues 190 to 199; the sequence is KRQLLKKRMK. The helical transmembrane segment at 203–223 threads the bilayer; that stretch reads LDVFIIGAIAKAIATTVTYPM. At 224 to 280 the chain is on the lumenal side; sequence QTVQSILRFGRHRLNPENRTLGSLRNVLSLLHQRVKRFGIMGLYKGLEAKLLQTVLT. Residues 244–307 form a necessary for targeting to peroxisomes and interaction with PEX19 region; sequence LGSLRNVLSL…VMGLKSTHKH (64 aa). A helical membrane pass occupies residues 281–301; it reads AALMFLVYEKLTAATFTVMGL. The Cytoplasmic portion of the chain corresponds to 302-307; that stretch reads KSTHKH.

It belongs to the mitochondrial carrier (TC 2.A.29) family. Interacts (via N- and C-terminus peroxisomal targeting regions) with PEX19; the interaction occurs with the newly synthesized SLC25A17 in the cytosol. Expressed in liver, kidney, heart, spleen, muscle and lung.

Its subcellular location is the cytoplasm. The protein resides in the peroxisome membrane. The enzyme catalyses AMP(out) + CoA(in) = AMP(in) + CoA(out). It carries out the reaction 3'-dephospho-CoA(in) + AMP(out) = 3'-dephospho-CoA(out) + AMP(in). The catalysed reaction is acetyl-CoA(in) + AMP(out) = acetyl-CoA(out) + AMP(in). It catalyses the reaction AMP(in) + NAD(+)(out) = AMP(out) + NAD(+)(in). The enzyme catalyses FAD(in) + AMP(out) = FAD(out) + AMP(in). It carries out the reaction FMN(in) + AMP(out) = FMN(out) + AMP(in). The catalysed reaction is AMP(in) + ADP(out) = AMP(out) + ADP(in). It catalyses the reaction adenosine 3',5'-bisphosphate(in) + AMP(out) = adenosine 3',5'-bisphosphate(out) + AMP(in). The enzyme catalyses FAD(in) + CoA(out) = FAD(out) + CoA(in). It carries out the reaction FAD(in) + adenosine 3',5'-bisphosphate(out) = FAD(out) + adenosine 3',5'-bisphosphate(in). The catalysed reaction is FMN(in) + CoA(out) = FMN(out) + CoA(in). It catalyses the reaction FMN(in) + adenosine 3',5'-bisphosphate(out) = FMN(out) + adenosine 3',5'-bisphosphate(in). The enzyme catalyses FAD(out) + NAD(+)(in) = FAD(in) + NAD(+)(out). It carries out the reaction FMN(out) + NAD(+)(in) = FMN(in) + NAD(+)(out). The catalysed reaction is NAD(+)(in) + CoA(out) = NAD(+)(out) + CoA(in). It catalyses the reaction adenosine 3',5'-bisphosphate(out) + NAD(+)(in) = adenosine 3',5'-bisphosphate(in) + NAD(+)(out). The enzyme catalyses FMN(out) + ADP(in) = FMN(in) + ADP(out). It carries out the reaction FAD(out) + ADP(in) = FAD(in) + ADP(out). The catalysed reaction is ADP(out) + CoA(in) = ADP(in) + CoA(out). It catalyses the reaction adenosine 3',5'-bisphosphate(in) + ADP(out) = adenosine 3',5'-bisphosphate(out) + ADP(in). Peroxisomal transporter for multiple cofactors like coenzyme A (CoA), flavin adenine dinucleotide (FAD), flavin mononucleotide (FMN) and nucleotide adenosine monophosphate (AMP), and to a lesser extent for nicotinamide adenine dinucleotide (NAD(+)), adenosine diphosphate (ADP) and adenosine 3',5'-diphosphate (PAP). May catalyze the transport of free CoA, FAD and NAD(+) from the cytosol into the peroxisomal matrix by a counter-exchange mechanism. In Mus musculus (Mouse), this protein is Peroxisomal membrane protein PMP34 (Slc25a17).